The primary structure comprises 417 residues: NADH-quinone oxidoreductase subunit D (417 aa).

The protein belongs to the complex I 49 kDa subunit family. In terms of assembly, NDH-1 is composed of 14 different subunits. Subunits NuoB, C, D, E, F, and G constitute the peripheral sector of the complex.

The protein localises to the cell inner membrane. It catalyses the reaction a quinone + NADH + 5 H(+)(in) = a quinol + NAD(+) + 4 H(+)(out). Its function is as follows. NDH-1 shuttles electrons from NADH, via FMN and iron-sulfur (Fe-S) centers, to quinones in the respiratory chain. The immediate electron acceptor for the enzyme in this species is believed to be ubiquinone. Couples the redox reaction to proton translocation (for every two electrons transferred, four hydrogen ions are translocated across the cytoplasmic membrane), and thus conserves the redox energy in a proton gradient. In Alkalilimnicola ehrlichii (strain ATCC BAA-1101 / DSM 17681 / MLHE-1), this protein is NADH-quinone oxidoreductase subunit D.